The following is a 713-amino-acid chain: Probable muscarinic acetylcholine receptor gar-1 (713 aa).

Over 1–20 (MPNYTVPPDPADTSWDSPYS) the chain is Extracellular. Asn-3 is a glycosylation site (N-linked (GlcNAc...) asparagine). The helical transmembrane segment at 21–41 (IPVQIVVWIIIIVLSLETIIG) threads the bilayer. Residues 42–66 (NAMVVMAYRIERNISKQVSNRYIVS) are Cytoplasmic-facing. The helical transmembrane segment at 67-87 (LAISDLIIGIEGFPFFTVYVL) threads the bilayer. Residues 88–101 (NGDRWPLGWVACQT) are Extracellular-facing. An intrachain disulfide couples Cys-99 to Cys-180. The helical transmembrane segment at 102–122 (WLFLDYTLCLVSILTVLLITA) threads the bilayer. The Cytoplasmic segment spans residues 123–144 (DRYLSVCHTAKYLKWQSPTKTQ). A helical transmembrane segment spans residues 145 to 165 (LLIVMSWLLPAIIFGIMIYGW). The Extracellular portion of the chain corresponds to 166-189 (QAMTGQSTSMSGAECSAPFLSNPY). A helical transmembrane segment spans residues 190-210 (VNMGMYVAYYWTTLVAMLILY). Residues 211–633 (KGIHQAAKNL…QTKAEKRAHK (423 aa)) lie on the Cytoplasmic side of the membrane. 4 disordered regions span residues 256-350 (KEKA…SRRC), 381-403 (SRYS…VEKA), 427-475 (KNTD…KQAE), and 515-585 (LIRR…TDTF). Composition is skewed to polar residues over residues 266-275 (SGYTSNQAGD) and 287-315 (PETS…NDQN). Composition is skewed to basic and acidic residues over residues 320 to 333 (EEER…RESN) and 393 to 403 (HENDEKEVEKA). Positions 429-439 (TDSNNDSDTTS) are enriched in low complexity. Over residues 444-457 (RSRKYKKNKRPRSS) the composition is skewed to basic residues. A compositionally biased stretch (polar residues) spans 557 to 571 (LTVNNENRGETSSQP). A helical transmembrane segment spans residues 634–656 (AFRTITFIVGFFAILWSPYYIMA). Residues 657 to 670 (TVYGFCKGECIPSF) lie on the Extracellular side of the membrane. A helical transmembrane segment spans residues 671–693 (LYTLSYYMCYLNSSGNPFAYALA). At 694–713 (NRQFRSAFMRMFRGNFNKVA) the chain is on the cytoplasmic side.

It belongs to the G-protein coupled receptor 1 family. Muscarinic acetylcholine receptor subfamily. In terms of tissue distribution, expressed in head region of the larva. In adults, expression is seen in the periventricularis magnocellularis (PVM) neuron.

The protein resides in the cell membrane. The muscarinic acetylcholine receptor mediates various cellular responses, including inhibition of adenylate cyclase, breakdown of phosphoinositides and modulation of potassium channels through the action of G proteins. Primary transducing effect is Pi turnover. The protein is Probable muscarinic acetylcholine receptor gar-1 (gar-1) of Caenorhabditis elegans.